A 125-amino-acid chain; its full sequence is ATP synthase epsilon chain (125 aa).

This sequence belongs to the ATPase epsilon chain family. In terms of assembly, F-type ATPases have 2 components, CF(1) - the catalytic core - and CF(0) - the membrane proton channel. CF(1) has five subunits: alpha(3), beta(3), gamma(1), delta(1), epsilon(1). CF(0) has three main subunits: a, b and c.

The protein resides in the cell inner membrane. In terms of biological role, produces ATP from ADP in the presence of a proton gradient across the membrane. The sequence is that of ATP synthase epsilon chain from Aliarcobacter butzleri (strain RM4018) (Arcobacter butzleri).